The sequence spans 432 residues: Homogentisate 1,2-dioxygenase (432 aa).

Catalysis depends on histidine 286, which acts as the Proton acceptor. The Fe cation site is built by histidine 329 and glutamate 335. Homogentisate is bound by residues tyrosine 344 and histidine 365. Histidine 365 is a Fe cation binding site.

Belongs to the homogentisate dioxygenase family. Hexamer; dimer of trimers. The cofactor is Fe cation.

It carries out the reaction homogentisate + O2 = 4-maleylacetoacetate + H(+). Its pathway is amino-acid degradation; L-phenylalanine degradation; acetoacetate and fumarate from L-phenylalanine: step 4/6. In terms of biological role, involved in the catabolism of homogentisate (2,5-dihydroxyphenylacetate or 2,5-OH-PhAc), a central intermediate in the degradation of phenylalanine and tyrosine. Catalyzes the oxidative ring cleavage of the aromatic ring of homogentisate to yield maleylacetoacetate. This is Homogentisate 1,2-dioxygenase from Bordetella petrii (strain ATCC BAA-461 / DSM 12804 / CCUG 43448).